The primary structure comprises 60 residues: Large ribosomal subunit protein bL32 (60 aa).

It belongs to the bacterial ribosomal protein bL32 family.

The polypeptide is Large ribosomal subunit protein bL32 (Streptococcus equi subsp. zooepidemicus (strain MGCS10565)).